The following is a 163-amino-acid chain: tRNA-acetylating toxin 2 (163 aa).

9 residues coordinate acetyl-CoA: L89, V91, H96, G97, Q98, G99, A101, R102, and E132. Y137 is a catalytic residue. Residue R139 coordinates acetyl-CoA.

This sequence belongs to the acetyltransferase family. GNAT subfamily. Homodimer (in absence of antitoxin). Forms a complex with cognate antitoxin TacA2. Forms a 4:2 antitoxin:toxin complex with cognate antitoxin TacA2.

The catalysed reaction is glycyl-tRNA(Gly) + acetyl-CoA = N-acetylglycyl-tRNA(Gly) + CoA + H(+). Its function is as follows. Toxic component of a type II toxin-antitoxin (TA) system. Acetylates tRNA and inhibits translation. Acetylates exclusively Gly in situ. Overexpression during the lag phase of a tacA2-tacT2 deletion strain leads to very small increase in persister cells in the presence of cefotaxime but no detectable growth phenotype in absence of antibiotics. Compared to a protein with a single amino acid change (TacT2 from S.enterica NCTC 13349, Glu-29 is Lys in NCTC 13349) this protein binds tRNA very poorly and acetylates tRNA very poorly. Persister cell formation is neutralized by cognate antitoxin TacA2. Neutralized only by cognate antitoxin TacA2 (A8), but not by TacA1 or TacA3. Plays a role in persister cell formation. The TacA2-TacT2 complex both represses and derepresses expression of its own operon. The polypeptide is tRNA-acetylating toxin 2 (Salmonella typhimurium (strain 14028s / SGSC 2262)).